A 156-amino-acid polypeptide reads, in one-letter code: ATP synthase subunit b (156 aa).

The chain crosses the membrane as a helical span at residues alanine 13–isoleucine 33.

This sequence belongs to the ATPase B chain family. As to quaternary structure, F-type ATPases have 2 components, F(1) - the catalytic core - and F(0) - the membrane proton channel. F(1) has five subunits: alpha(3), beta(3), gamma(1), delta(1), epsilon(1). F(0) has three main subunits: a(1), b(2) and c(10-14). The alpha and beta chains form an alternating ring which encloses part of the gamma chain. F(1) is attached to F(0) by a central stalk formed by the gamma and epsilon chains, while a peripheral stalk is formed by the delta and b chains.

Its subcellular location is the cell inner membrane. Functionally, f(1)F(0) ATP synthase produces ATP from ADP in the presence of a proton or sodium gradient. F-type ATPases consist of two structural domains, F(1) containing the extramembraneous catalytic core and F(0) containing the membrane proton channel, linked together by a central stalk and a peripheral stalk. During catalysis, ATP synthesis in the catalytic domain of F(1) is coupled via a rotary mechanism of the central stalk subunits to proton translocation. Component of the F(0) channel, it forms part of the peripheral stalk, linking F(1) to F(0). This Shewanella woodyi (strain ATCC 51908 / MS32) protein is ATP synthase subunit b.